Reading from the N-terminus, the 146-residue chain is Hemoglobin subunit beta (146 aa).

At Val1 the chain carries N-acetylvaline. The region spanning 2–146 is the Globin domain; sequence NLTAAEKTQV…VANALAHKYH (145 aa). Residue Thr12 is modified to Phosphothreonine. Lys59 carries the N6-acetyllysine modification. His63 lines the heme b pocket. N6-acetyllysine is present on Lys82. His92 serves as a coordination point for heme b. Cys93 is subject to S-nitrosocysteine. The residue at position 144 (Lys144) is an N6-acetyllysine.

Belongs to the globin family. As to quaternary structure, heterotetramer of two alpha chains and two beta chains. Red blood cells.

In terms of biological role, involved in oxygen transport from the lung to the various peripheral tissues. This chain is Hemoglobin subunit beta (HBB), found in Loxodonta africana (African elephant).